Here is a 469-residue protein sequence, read N- to C-terminus: Asparagine--tRNA ligase (469 aa).

It belongs to the class-II aminoacyl-tRNA synthetase family. Homodimer.

The protein resides in the cytoplasm. The enzyme catalyses tRNA(Asn) + L-asparagine + ATP = L-asparaginyl-tRNA(Asn) + AMP + diphosphate + H(+). This is Asparagine--tRNA ligase from Porphyromonas gingivalis (strain ATCC 33277 / DSM 20709 / CIP 103683 / JCM 12257 / NCTC 11834 / 2561).